A 268-amino-acid polypeptide reads, in one-letter code: MATNTSTLNSTETVLRTENLNVYYGKFLALQNIWLDIPKNKVTAFIGPSGCGKSTLLRCYNRLNDLIESFRAEGKIFYYSKNLYAQDIDPVEVRRRIGMVFQRPNPFPKSIYDNIAFGAKINGYKGNMDELVERSLRKAALWDEVKDKLRQSGASLSGGQQQRLCIARAIAVQPEIILMDEPCSALDPISTLRVEELIHELKEQYTIVIVTHNMQQAARVSDRTAFFNVRPTETGGRIGYLVEYDATESIFNNPKQEDTRDYVSGRFG.

The region spanning 15 to 254 (LRTENLNVYY…DATESIFNNP (240 aa)) is the ABC transporter domain. ATP is bound at residue 47 to 54 (GPSGCGKS).

Belongs to the ABC transporter superfamily. Phosphate importer (TC 3.A.1.7) family. The complex is composed of two ATP-binding proteins (PstB), two transmembrane proteins (PstC and PstA) and a solute-binding protein (PstS).

The protein resides in the cell inner membrane. The catalysed reaction is phosphate(out) + ATP + H2O = ADP + 2 phosphate(in) + H(+). Functionally, part of the ABC transporter complex PstSACB involved in phosphate import. Responsible for energy coupling to the transport system. The polypeptide is Phosphate import ATP-binding protein PstB 3 (Nostoc sp. (strain PCC 7120 / SAG 25.82 / UTEX 2576)).